A 559-amino-acid polypeptide reads, in one-letter code: Endoglin (559 aa).

A signal peptide spans 1–20; that stretch reads MKSICCVLVLCLLLCRRSTA. At 21–473 the chain is on the extracellular side; sequence SESICELKDV…SCFEFGLSAV (453 aa). Cystine bridges form between Cys25-Cys201 and Cys47-Cys174. 7 N-linked (GlcNAc...) asparagine glycosylation sites follow: Asn55, Asn79, Asn109, Asn133, Asn170, Asn302, and Asn352. The cysteines at positions 381 and 427 are disulfide-linked. Residues 474–494 traverse the membrane as a helical segment; it reads LGIAFGGFLIGVLLTGALWFI. The Cytoplasmic segment spans residues 495–559; it reads KIRTGHPVAL…TQSTPTSSMA (65 aa). Residues 528–559 are disordered; sequence RQPVPTHPSPSENSSANASIGSTQSTPTSSMA. Residues 536 to 546 are compositionally biased toward low complexity; sequence SPSENSSANAS. Over residues 547–559 the composition is skewed to polar residues; the sequence is IGSTQSTPTSSMA.

In terms of assembly, homodimer; disulfide-linked.

It is found in the cell membrane. Functionally, vascular endothelium glycoprotein that plays an important role in the regulation of angiogenesis. Required for normal structure and integrity of adult vasculature. Important for endothelial cell shape changes in response to blood flow, which drive vascular remodeling and establishment of normal vascular morphology during angiogenesis. In Danio rerio (Zebrafish), this protein is Endoglin.